A 767-amino-acid polypeptide reads, in one-letter code: Two-component response regulator-like PRR73 (767 aa).

The segment at 1–64 (MGSACEAGTD…EPQQTDEQKE (64 aa)) is disordered. A Response regulatory domain is found at 82–200 (RVLLVENDDS…ELKNLWQHVW (119 aa)). A compositionally biased stretch (low complexity) spans 205–214 (SSSGSGSESG). 5 disordered regions span residues 205–272 (SSSG…QSSW), 312–388 (RWLP…NEPT), 476–546 (ASNQ…RGKV), 646–701 (ANYS…SGSG), and 727–767 (NFGK…DEDR). A compositionally biased stretch (acidic residues) spans 238-252 (DNEDDDDNDEDDDDL). 3 stretches are compositionally biased toward polar residues: residues 263–272 (DNGSGTQSSW), 343–361 (RNSS…VNPT), and 488–497 (CSPQDNSSEA). Residues 518–531 (GSNGSSNNNDMGSS) show a composition bias toward low complexity. Positions 532–543 (TKNAITKPSSNR) are enriched in polar residues. Over residues 689–700 (GAGGGNGSGSGS) the composition is skewed to gly residues. The CCT domain occupies 712–754 (REAALNKFRQKRKVRNFGKKVRYQSRKRLAEQRPRIRGQFVRQ). Basic residues predominate over residues 727–738 (NFGKKVRYQSRK).

This sequence belongs to the ARR-like family.

The protein localises to the nucleus. Functionally, controls photoperiodic flowering response. Seems to be one of the component of the circadian clock. Expression of several members of the ARR-like family is controlled by circadian rhythm. The particular coordinated sequential expression of PRR73, PRR37, PRR95, PRR59 and PPR1 result to circadian waves that may be at the basis of the endogenous circadian clock. The chain is Two-component response regulator-like PRR73 (PRR73) from Oryza sativa subsp. japonica (Rice).